Consider the following 155-residue polypeptide: MPRFIEGKLDATGLRFGIIVSRFNSFIGERLLEGALDALVRHGGDDGDIDVVRVPGAFEIPLTAQKLVQKGNYDAVICLGAVIRGSTPHFDYVAAEVSKGIAHVSLATGVPVVFGVLTTDTIEQAIERAGTKAGNKGFDAAVTAIETARLYRELR.

Residues F23, 57–59 (AFE), and 81–83 (AVI) contribute to the 5-amino-6-(D-ribitylamino)uracil site. 86 to 87 (ST) lines the (2S)-2-hydroxy-3-oxobutyl phosphate pocket. H89 functions as the Proton donor in the catalytic mechanism. F114 provides a ligand contact to 5-amino-6-(D-ribitylamino)uracil. R128 provides a ligand contact to (2S)-2-hydroxy-3-oxobutyl phosphate.

Belongs to the DMRL synthase family.

The catalysed reaction is (2S)-2-hydroxy-3-oxobutyl phosphate + 5-amino-6-(D-ribitylamino)uracil = 6,7-dimethyl-8-(1-D-ribityl)lumazine + phosphate + 2 H2O + H(+). The protein operates within cofactor biosynthesis; riboflavin biosynthesis; riboflavin from 2-hydroxy-3-oxobutyl phosphate and 5-amino-6-(D-ribitylamino)uracil: step 1/2. Its function is as follows. Catalyzes the formation of 6,7-dimethyl-8-ribityllumazine by condensation of 5-amino-6-(D-ribitylamino)uracil with 3,4-dihydroxy-2-butanone 4-phosphate. This is the penultimate step in the biosynthesis of riboflavin. This chain is 6,7-dimethyl-8-ribityllumazine synthase, found in Geobacter sulfurreducens (strain ATCC 51573 / DSM 12127 / PCA).